The sequence spans 1085 residues: DNA polymerase (1085 aa).

Residues 1059 to 1085 (YDQKRPNPRPQEPLLENPFWDDSSQTA) form a disordered region.

It belongs to the DNA polymerase type-B family. Heterodimer with the terminal protein; this heterodimer binds to bp 9 to 18 of the genome. Forms a complex with viral pTP, DBP and hosts NFIA and POU2F1/OCT1 for initiation of replication.

Its subcellular location is the host nucleus. It carries out the reaction DNA(n) + a 2'-deoxyribonucleoside 5'-triphosphate = DNA(n+1) + diphosphate. Eukaryotic-type DNA polymerase involved in viral genomic replication. DNA synthesis is protein primed, and acts in a strand displacement replication. Functionally, eukaryotic-type DNA polymerase involved in viral genomic replication. DNA synthesis is protein primed, and acts in a strand displacement replication. Assembles in complex with viral pTP, DBP, host NFIA and host POU2F1/OCT1 on viral origin of replication. The polymerase covalently transfers dCMP onto pTP, thereby initiating complementary strand synthesis. The protein is DNA polymerase of Pantherophis guttatus (Corn snake).